The following is a 453-amino-acid chain: Zinc finger and BTB domain-containing protein 44 (453 aa).

Residue Lys4 forms a Glycyl lysine isopeptide (Lys-Gly) (interchain with G-Cter in SUMO2) linkage. The 68-residue stretch at 31–98 (CDITIRVQDK…AYTATLSINT (68 aa)) folds into the BTB domain. Ser135 is subject to Phosphoserine. The segment at 135-157 (SQPEKSLDAGQENSSNCNFTSRD) is disordered. Polar residues predominate over residues 145–157 (QENSSNCNFTSRD). A phosphoserine mark is found at Ser159, Ser161, Ser165, Ser191, Ser194, and Ser199. A Phosphothreonine modification is found at Thr200. Residues 241–266 (QPEKAKQAENTRTLELPGPSEAGRRV) form a disordered region. A Glycyl lysine isopeptide (Lys-Gly) (interchain with G-Cter in SUMO2) cross-link involves residue Lys290. Disordered regions lie at residues 295-324 (SDEE…PGSE) and 336-366 (SSSI…ADDD). Positions 304 to 318 (SQPVSASQSSLSDQQ) are enriched in low complexity. Over residues 352–361 (TLQSTSSTNA) the composition is skewed to polar residues. C2H2-type zinc fingers lie at residues 399-421 (FQCP…MLIH) and 427-449 (FQCD…RLKH).

It localises to the nucleus. In Mus musculus (Mouse), this protein is Zinc finger and BTB domain-containing protein 44 (Zbtb44).